Reading from the N-terminus, the 96-residue chain is Large ribosomal subunit protein eL14 (96 aa).

It belongs to the eukaryotic ribosomal protein eL14 family.

The chain is Large ribosomal subunit protein eL14 from Saccharolobus islandicus (strain Y.N.15.51 / Yellowstone #2) (Sulfolobus islandicus).